The chain runs to 497 residues: Glutamate--tRNA ligase (497 aa).

Positions 13–23 (PSPTGTPHVGM) match the 'HIGH' region motif. Residues 257-261 (KLSKR) carry the 'KMSKS' region motif. Lysine 260 is a binding site for ATP.

Belongs to the class-I aminoacyl-tRNA synthetase family. Glutamate--tRNA ligase type 1 subfamily. In terms of assembly, monomer.

The protein localises to the cytoplasm. It catalyses the reaction tRNA(Glu) + L-glutamate + ATP = L-glutamyl-tRNA(Glu) + AMP + diphosphate. Its function is as follows. Catalyzes the attachment of glutamate to tRNA(Glu) in a two-step reaction: glutamate is first activated by ATP to form Glu-AMP and then transferred to the acceptor end of tRNA(Glu). The sequence is that of Glutamate--tRNA ligase from Corynebacterium diphtheriae (strain ATCC 700971 / NCTC 13129 / Biotype gravis).